We begin with the raw amino-acid sequence, 577 residues long: Isocitrate dehydrogenase kinase/phosphatase (577 aa).

ATP is bound by residues 318–324 and Lys-339; that span reads APGVRGM. Asp-374 is a catalytic residue.

This sequence belongs to the AceK family.

It is found in the cytoplasm. The enzyme catalyses L-seryl-[isocitrate dehydrogenase] + ATP = O-phospho-L-seryl-[isocitrate dehydrogenase] + ADP + H(+). Functionally, bifunctional enzyme which can phosphorylate or dephosphorylate isocitrate dehydrogenase (IDH) on a specific serine residue. This is a regulatory mechanism which enables bacteria to bypass the Krebs cycle via the glyoxylate shunt in response to the source of carbon. When bacteria are grown on glucose, IDH is fully active and unphosphorylated, but when grown on acetate or ethanol, the activity of IDH declines drastically concomitant with its phosphorylation. In Pseudomonas aeruginosa (strain UCBPP-PA14), this protein is Isocitrate dehydrogenase kinase/phosphatase.